The sequence spans 367 residues: Metacaspase-1 (367 aa).

A disordered region spans residues aspartate 47–histidine 77. Pro residues predominate over residues threonine 50–leucine 73. Active-site residues include histidine 164 and cysteine 220.

The protein belongs to the peptidase C14B family. In terms of assembly, interacts (via N-terminus) with LSD1. Post-translationally, proteolytically processed; by an autocatalytic mechanism.

Its function is as follows. Cysteine protease that cleaves specifically after arginine or lysine residues. Does not cleave caspase-specific substrates. Acts as a positive regulator of cell death. Required for both oxidative stress cell death response and hypersensitive cell death response mediated by immune response. The chain is Metacaspase-1 (AMC1) from Arabidopsis thaliana (Mouse-ear cress).